A 153-amino-acid chain; its full sequence is UPF0260 protein YcgN (153 aa).

The protein belongs to the UPF0260 family.

The chain is UPF0260 protein YcgN from Shigella flexneri serotype 5b (strain 8401).